The primary structure comprises 568 residues: Putative U-box domain-containing protein 55 (568 aa).

The stretch at 217–464 (QSESDRNDQL…KVAAEKDAAS (248 aa)) forms a coiled coil. Positions 496-568 (QPPSYFICPI…AIQEWLQRNS (73 aa)) constitute a U-box domain.

The catalysed reaction is S-ubiquitinyl-[E2 ubiquitin-conjugating enzyme]-L-cysteine + [acceptor protein]-L-lysine = [E2 ubiquitin-conjugating enzyme]-L-cysteine + N(6)-ubiquitinyl-[acceptor protein]-L-lysine.. It participates in protein modification; protein ubiquitination. Its function is as follows. Functions as an E3 ubiquitin ligase. The chain is Putative U-box domain-containing protein 55 (PUB55) from Arabidopsis thaliana (Mouse-ear cress).